The chain runs to 435 residues: Tol-Pal system protein TolB (435 aa).

An N-terminal signal peptide occupies residues Met-1 to Ala-20.

The protein belongs to the TolB family. As to quaternary structure, the Tol-Pal system is composed of five core proteins: the inner membrane proteins TolA, TolQ and TolR, the periplasmic protein TolB and the outer membrane protein Pal. They form a network linking the inner and outer membranes and the peptidoglycan layer.

The protein resides in the periplasm. Part of the Tol-Pal system, which plays a role in outer membrane invagination during cell division and is important for maintaining outer membrane integrity. This is Tol-Pal system protein TolB from Francisella tularensis subsp. mediasiatica (strain FSC147).